A 102-amino-acid polypeptide reads, in one-letter code: UPF0122 protein MPN_424 (102 aa).

It belongs to the UPF0122 family.

Its function is as follows. Might take part in the signal recognition particle (SRP) pathway. This is inferred from the conservation of its genetic proximity to ftsY/ffh. May be a regulatory protein. This Mycoplasma pneumoniae (strain ATCC 29342 / M129 / Subtype 1) (Mycoplasmoides pneumoniae) protein is UPF0122 protein MPN_424.